Consider the following 280-residue polypeptide: MKEHRTRKRFGQHFLHDRNLVDRMIRTLGLQTGDTLVEIGPGRGALTYPLLEELPHLHVVELDRDLIALLRQENTPERLTIHESDALRFDFRTLKPADKPLRVIGNLPYNISTPLIFHLLAQADAISDMTFMLQKEVVERLTASPGTRDWGRLSIMVQYHCQADYLFFVPPEAFSPPPRVDSAVVRLIPHDSPPHPADDEDHLRKLVAQAFTQRRKAIRNGLKSWVSAEQFQAVGIDAGLRPDQLSVADYVALANISRPPADVEDANAPHTEQGKGDNSQ.

Positions 13, 15, 40, 61, 85, and 106 each coordinate S-adenosyl-L-methionine. A disordered region spans residues 258–280; sequence RPPADVEDANAPHTEQGKGDNSQ.

Belongs to the class I-like SAM-binding methyltransferase superfamily. rRNA adenine N(6)-methyltransferase family. RsmA subfamily.

The protein resides in the cytoplasm. It carries out the reaction adenosine(1518)/adenosine(1519) in 16S rRNA + 4 S-adenosyl-L-methionine = N(6)-dimethyladenosine(1518)/N(6)-dimethyladenosine(1519) in 16S rRNA + 4 S-adenosyl-L-homocysteine + 4 H(+). Functionally, specifically dimethylates two adjacent adenosines (A1518 and A1519) in the loop of a conserved hairpin near the 3'-end of 16S rRNA in the 30S particle. May play a critical role in biogenesis of 30S subunits. The protein is Ribosomal RNA small subunit methyltransferase A of Alcanivorax borkumensis (strain ATCC 700651 / DSM 11573 / NCIMB 13689 / SK2).